The sequence spans 274 residues: NADPH-dependent 7-cyano-7-deazaguanine reductase (274 aa).

The segment at 1–33 is disordered; it reads MPKKDALDHLSLGQHTDYPNEYDPKQLQPVPRS. 84-86 lines the substrate pocket; it reads IES. 86-87 is an NADPH binding site; that stretch reads SK. Cys-183 acts as the Thioimide intermediate in catalysis. The active-site Proton donor is Asp-190. 222-223 lines the substrate pocket; sequence HE. 250–251 is an NADPH binding site; sequence RG.

Belongs to the GTP cyclohydrolase I family. QueF type 2 subfamily. In terms of assembly, homodimer.

Its subcellular location is the cytoplasm. The enzyme catalyses 7-aminomethyl-7-carbaguanine + 2 NADP(+) = 7-cyano-7-deazaguanine + 2 NADPH + 3 H(+). Its pathway is tRNA modification; tRNA-queuosine biosynthesis. Its function is as follows. Catalyzes the NADPH-dependent reduction of 7-cyano-7-deazaguanine (preQ0) to 7-aminomethyl-7-deazaguanine (preQ1). The polypeptide is NADPH-dependent 7-cyano-7-deazaguanine reductase (Idiomarina loihiensis (strain ATCC BAA-735 / DSM 15497 / L2-TR)).